The sequence spans 835 residues: Leucine--tRNA ligase (835 aa).

The 'HIGH' region signature appears at 36-46; it reads PYPSGKIHVGH. The 'KMSKS' region signature appears at 602-606; the sequence is KMSKS. Residue Lys605 participates in ATP binding.

The protein belongs to the class-I aminoacyl-tRNA synthetase family.

It is found in the cytoplasm. It carries out the reaction tRNA(Leu) + L-leucine + ATP = L-leucyl-tRNA(Leu) + AMP + diphosphate. The polypeptide is Leucine--tRNA ligase (Rickettsia felis (strain ATCC VR-1525 / URRWXCal2) (Rickettsia azadi)).